We begin with the raw amino-acid sequence, 1940 residues long: Myosin-2 (1940 aa).

The Myosin N-terminal SH3-like domain occupies 33–82; sequence DAKTSVFVAEPKESFVKGTIQSREGGKVTVKTEGGATLTVKEDQVFPMNP. Phosphothreonine is present on residues Thr64 and Thr69. The region spanning 86-783 is the Myosin motor domain; sequence DKIEDMAMMT…LLGLLEEMRD (698 aa). Residue Lys130 is modified to N6,N6,N6-trimethyllysine. 179–186 contacts ATP; it reads GESGAGKT. Tyr389 carries the phosphotyrosine modification. Ser392 is subject to Phosphoserine. A Phosphothreonine modification is found at Thr419. Ser625 carries the post-translational modification Phosphoserine. The interval 660-682 is actin-binding; it reads LNKLMTNLRSTHPHFVRCIIPNE. Position 758 is a pros-methylhistidine (His758). The actin-binding stretch occupies residues 762 to 776; the sequence is KFGHTKVFFKAGLLG. The region spanning 786 to 815 is the IQ domain; it reads LAQLMTRTQARCRGFLARVEYQKMVERRES. Residues 844–1940 adopt a coiled-coil conformation; that stretch reads LLKSAETEKE…EVHTKIISEE (1097 aa). 4 positions are modified to phosphoserine: Ser1093, Ser1097, Ser1163, and Ser1238. Residue Thr1242 is modified to Phosphothreonine. Phosphoserine is present on Ser1244. Phosphothreonine occurs at positions 1256 and 1287. 4 positions are modified to phosphoserine: Ser1289, Ser1293, Ser1304, and Ser1307. The residue at position 1465 (Tyr1465) is a Phosphotyrosine. At Thr1468 the chain carries Phosphothreonine. Tyr1493 bears the Phosphotyrosine mark. Ser1496 is modified (phosphoserine). Residue Thr1502 is modified to Phosphothreonine. Phosphoserine is present on Ser1515. Thr1518 is subject to Phosphothreonine. Phosphoserine occurs at positions 1543, 1555, 1575, 1601, 1715, and 1727. Phosphothreonine occurs at positions 1731 and 1737. The disordered stretch occupies residues 1886 to 1905; it reads QAEEAEEQSNTNLSKFRKLQ.

The protein belongs to the TRAFAC class myosin-kinesin ATPase superfamily. Myosin family. In terms of assembly, muscle myosin is a hexameric protein that consists of 2 heavy chain subunits (MHC), 2 alkali light chain subunits (MLC) and 2 regulatory light chain subunits (MLC-2). Interacts with GCSAM.

It localises to the cytoplasm. Its subcellular location is the myofibril. Functionally, myosins are actin-based motor molecules with ATPase activity essential for muscle contraction. This Bos taurus (Bovine) protein is Myosin-2 (MYH2).